A 436-amino-acid chain; its full sequence is tRNA modification GTPase MnmE (436 aa).

R20, E77, and K117 together coordinate (6S)-5-formyl-5,6,7,8-tetrahydrofolate. A TrmE-type G domain is found at 214–360; that stretch reads GLKIVIAGAP…FIKELESFCL (147 aa). GTP contacts are provided by residues 224–229, 243–249, and 268–271; these read NSGKSS, MEEAGTT, and DTAG. Mg(2+) is bound by residues S228 and T249. K436 contacts (6S)-5-formyl-5,6,7,8-tetrahydrofolate.

Belongs to the TRAFAC class TrmE-Era-EngA-EngB-Septin-like GTPase superfamily. TrmE GTPase family. Homodimer. Heterotetramer of two MnmE and two MnmG subunits. Requires K(+) as cofactor.

The protein localises to the cytoplasm. Exhibits a very high intrinsic GTPase hydrolysis rate. Involved in the addition of a carboxymethylaminomethyl (cmnm) group at the wobble position (U34) of certain tRNAs, forming tRNA-cmnm(5)s(2)U34. The chain is tRNA modification GTPase MnmE from Bartonella quintana (strain Toulouse) (Rochalimaea quintana).